Reading from the N-terminus, the 739-residue chain is Sulfate transporter (739 aa).

The disordered stretch occupies residues 1–27 (MSSESKEQHNVSPRDSAEGNDSYPSGI). Ser12 and Ser16 each carry phosphoserine. Transmembrane regions (helical) follow at residues 112–132 (VMSGLIVGILLVPQSIAYSLL) and 137–157 (PVYGLYTSFFASIIYFLLGTS). 2 N-linked (GlcNAc...) asparagine glycosylation sites follow: Asn199 and Asn205. Transmembrane regions (helical) follow at residues 219–239 (IMVGSTVTFIAGVYQVAMGFF) and 242–262 (GFVSVYLSDALLSGFVTGASF). Asn357 is a glycosylation site (N-linked (GlcNAc...) asparagine). 4 helical membrane-spanning segments follow: residues 378–398 (LIPSVAVDAIAISIIGFAITV), 420–440 (AIGFCNIIPSFFHCFTTSAAL), 455–475 (LSGVVTALVLLLVLLVIAPLF), and 524–544 (LLSTEIGLLVGVCFSIFCVIL). In terms of domain architecture, STAS spans 568-719 (AYKNLQIKPG…YSVYEAMAFA (152 aa)).

Belongs to the SLC26A/SulP transporter (TC 2.A.53) family. Post-translationally, N-glycosylated. In terms of tissue distribution, ubiquitously expressed.

Its subcellular location is the cell membrane. It localises to the apical cell membrane. It carries out the reaction oxalate(in) + sulfate(out) = oxalate(out) + sulfate(in). The enzyme catalyses sulfate(out) + 2 chloride(in) = sulfate(in) + 2 chloride(out). The catalysed reaction is oxalate(out) + 2 chloride(in) = oxalate(in) + 2 chloride(out). It catalyses the reaction bromide(in) + chloride(out) = bromide(out) + chloride(in). It carries out the reaction nitrate(in) + chloride(out) = nitrate(out) + chloride(in). The enzyme catalyses iodide(in) + chloride(out) = iodide(out) + chloride(in). With respect to regulation, an extracellular acidic pH inhibits chloride-sulfate and chloride-oxalate exchange activity whereas an intracellular acidic pH activates chloride-sulfate exchange with no effect on chloride-oxalate exchange activity. Functionally, sulfate transporter which mediates sulfate uptake into chondrocytes in order to maintain adequate sulfation of proteoglycans which is needed for cartilage development. Mediates electroneutral anion exchange of sulfate ions for oxalate ions and of sulfate and oxalate ions for chloride ions. Mediates exchange of sulfate and oxalate ions for hydroxyl ions and of chloride ions for bromide, iodide and nitrate ions. The coupling of sulfate transport to both hydroxyl and chloride ions likely serves to ensure transport at both acidic pH when most sulfate uptake is mediated by sulfate-hydroxide exchange and alkaline pH when most sulfate uptake is mediated by sulfate-chloride exchange. Essential for chondrocyte proliferation, differentiation and cell size expansion. This is Sulfate transporter (SLC26A2) from Homo sapiens (Human).